The primary structure comprises 421 residues: Protein ECERIFERUM 2 (421 aa).

N-acetylmethionine is present on Met-1.

The protein belongs to the plant acyltransferase family. As to expression, expressed at high levels in the epidermis of stems and young siliques. Expressed in flowers.

It is found in the endoplasmic reticulum. It localises to the nucleus. In terms of biological role, involved in biosynthesis of the epicuticular wax. Plays a role in very-long-chain fatty acid (VLCFA) biosynthesis and is required for C28 fatty acid elongation in stem. Despite its classification as a BAHD acyltransferase based on sequence homology, CER2 does not seem to share the catalytic mechanism of the members of the BAHD family. The protein is Protein ECERIFERUM 2 (CER2) of Arabidopsis thaliana (Mouse-ear cress).